Reading from the N-terminus, the 363-residue chain is DNA repair protein rlp1 (363 aa).

Belongs to the RecA family. RAD51 subfamily. Interacts with rdl1 and sws1.

The protein localises to the cytoplasm. It is found in the nucleus. Its function is as follows. Required for normal levels of meiotic recombination. Acts in the recombinational pathway of double-strand break (DSB) repair together with rhp51, rhp55 and rad22. Required for the full extent of DNA recombination and cell survival under condition of a replication fork collapse. The protein is DNA repair protein rlp1 of Schizosaccharomyces pombe (strain 972 / ATCC 24843) (Fission yeast).